Here is a 258-residue protein sequence, read N- to C-terminus: D-aminoacyl-tRNA deacylase (258 aa).

Belongs to the DtdA deacylase family. Monomer. Zn(2+) is required as a cofactor.

It carries out the reaction a D-aminoacyl-tRNA + H2O = a tRNA + a D-alpha-amino acid + H(+). It catalyses the reaction glycyl-tRNA(Ala) + H2O = tRNA(Ala) + glycine + H(+). Functionally, D-aminoacyl-tRNA deacylase with broad substrate specificity. By recycling D-aminoacyl-tRNA to D-amino acids and free tRNA molecules, this enzyme counteracts the toxicity associated with the formation of D-aminoacyl-tRNA entities in vivo. The polypeptide is D-aminoacyl-tRNA deacylase (Cenarchaeum symbiosum (strain A)).